Reading from the N-terminus, the 3584-residue chain is D-lysergyl-peptide-synthetase subunit 1 (3584 aa).

The segment at 25 to 44 (IESINGDKNKSERHTASSSA) is disordered. The segment covering 29–39 (NGDKNKSERHT) has biased composition (basic and acidic residues). Residues 307 to 706 (SCCSRPNSQA…LGRKDDQVKI (400 aa)) are adenylation (A) domain 1. Residues 848–917 (REKLLQALFA…TLREIVIVST (70 aa)) form the Carrier 1 domain. Serine 880 is modified (O-(pantetheine 4'-phosphoryl)serine). A condensation (C) domain 1 region spans residues 962 to 1353 (EDIYPCTHLQ…EHILTQIHSN (392 aa)). The adenylation (A) domain 2 stretch occupies residues 1396-1803 (QAKCQAQPDA…RRKDAQVKIR (408 aa)). In terms of domain architecture, Carrier 2 spans 1948–2016 (TEHEISAIWA…TIRKLALARG (69 aa)). The residue at position 1980 (serine 1980) is an O-(pantetheine 4'-phosphoryl)serine. The interval 2066–2483 (ERIYPCSPIQ…ALPVLDEDQM (418 aa)) is condensation (C) domain 2. Positions 2508-2906 (QCIRCPDSPS…GRNDDQVKVR (399 aa)) are adenylation (A) domain 3. Positions 3041–3109 (MEAELQQLVG…RLSDLARIVE (69 aa)) constitute a Carrier 3 domain. Serine 3073 is modified (O-(pantetheine 4'-phosphoryl)serine). Residues 3174-3472 (LYFSKPMASE…VAKSTTWSSD (299 aa)) are cyclization (Cyc) domain.

This sequence belongs to the NRP synthetase family.

It participates in alkaloid biosynthesis; ergot alkaloid biosynthesis. In terms of biological role, D-lysergyl-peptide-synthetase subunit 1; part of the gene cluster that mediates the biosynthesis of fungal ergot alkaloid. DmaW catalyzes the first step of ergot alkaloid biosynthesis by condensing dimethylallyl diphosphate (DMAP) and tryptophan to form 4-dimethylallyl-L-tryptophan. The second step is catalyzed by the methyltransferase easF that methylates 4-dimethylallyl-L-tryptophan in the presence of S-adenosyl-L-methionine, resulting in the formation of 4-dimethylallyl-L-abrine. The catalase easC and the FAD-dependent oxidoreductase easE then transform 4-dimethylallyl-L-abrine to chanoclavine-I which is further oxidized by easD in the presence of NAD(+), resulting in the formation of chanoclavine-I aldehyde. Agroclavine dehydrogenase easG then mediates the conversion of chanoclavine-I aldehyde to agroclavine via a non-enzymatic adduct reaction: the substrate is an iminium intermediate that is formed spontaneously from chanoclavine-I aldehyde in the presence of glutathione. The presence of easA is not required to complete this reaction. Further conversion of agroclavine to paspalic acid is a two-step process involving oxidation of agroclavine to elymoclavine and of elymoclavine to paspalic acid, the second step being performed by the elymoclavine oxidase cloA. Paspalic acid is then further converted to D-lysergic acid. Ergopeptines are assembled from D-lysergic acid and three different amino acids by the D-lysergyl-peptide-synthetases composed each of a monomudular and a trimodular nonribosomal peptide synthetase subunit. LpsB and lpsC encode the monomodular subunits responsible for D-lysergic acid activation and incorporation into the ergopeptine backbone. LpsA1 and A2 subunits encode the trimodular nonribosomal peptide synthetase assembling the tripeptide portion of ergopeptines. LpsA1 is responsible for formation of the major ergopeptine, ergotamine, and lpsA2 for alpha-ergocryptine, the minor ergopeptine of the total alkaloid mixture elaborated by C.purpurea. D-lysergyl-tripeptides are assembled by the nonribosomal peptide synthetases and released as N-(D-lysergyl-aminoacyl)-lactams. Cyclolization of the D-lysergyl-tripeptides is performed by the Fe(2+)/2-ketoglutarate-dependent dioxygenase easH which introduces a hydroxyl group into N-(D-lysergyl-aminoacyl)-lactam at alpha-C of the aminoacyl residue followed by spontaneous condensation with the terminal lactam carbonyl group. In Claviceps purpurea (strain 20.1) (Ergot fungus), this protein is D-lysergyl-peptide-synthetase subunit 1.